The sequence spans 601 residues: Abscisic acid cluster transcription factor abl7 (601 aa).

The segment at residues 13–40 is a DNA-binding region (zn(2)-C6 fungal-type); the sequence is CDECRRRKLKCDRVRPQCGTCALSESEC.

It is found in the nucleus. Functionally, transcription factor that regulates the expression of the gene cluster that mediates the biosynthesis of abscisic acid (ABA), a phytohormone that acts antagonistically toward salicylic acid (SA), jasmonic acid (JA) and ethylene (ETH) signaling, to impede plant defense responses. The protein is Abscisic acid cluster transcription factor abl7 of Leptosphaeria maculans (strain JN3 / isolate v23.1.3 / race Av1-4-5-6-7-8) (Blackleg fungus).